Consider the following 65-residue polypeptide: Large ribosomal subunit protein bL35 (65 aa).

The interval 1–26 is disordered; sequence MPKMKSNKGASKRFKKTASGGFKCKQ.

Belongs to the bacterial ribosomal protein bL35 family.

The sequence is that of Large ribosomal subunit protein bL35 from Idiomarina loihiensis (strain ATCC BAA-735 / DSM 15497 / L2-TR).